A 380-amino-acid chain; its full sequence is Homoserine O-acetyltransferase (380 aa).

Residues 70–366 form the AB hydrolase-1 domain; the sequence is NAVLVFHALT…SPHGHDAFLI (297 aa). Residue Ser-186 is the Nucleophile of the active site. Arg-250 contacts substrate. Active-site residues include Asp-333 and His-361. Residue Asp-362 coordinates substrate.

It belongs to the AB hydrolase superfamily. MetX family. Homodimer.

It localises to the cytoplasm. The enzyme catalyses L-homoserine + acetyl-CoA = O-acetyl-L-homoserine + CoA. The protein operates within amino-acid biosynthesis; L-methionine biosynthesis via de novo pathway; O-acetyl-L-homoserine from L-homoserine: step 1/1. Transfers an acetyl group from acetyl-CoA to L-homoserine, forming acetyl-L-homoserine. The sequence is that of Homoserine O-acetyltransferase from Thermus thermophilus (strain ATCC BAA-163 / DSM 7039 / HB27).